The chain runs to 370 residues: Ubiquitin carboxyl-terminal hydrolase 12 (370 aa).

Positions 1–4 match the Required for plasma membrane localization of USP12/WDR20 motif; that stretch reads MEIL. In terms of domain architecture, USP spans 39–369; that stretch reads FGLVNFGNTC…SGYILFYQSR (331 aa). Cys48 serves as the catalytic Nucleophile. The interval 145 to 169 is disordered; the sequence is KQEKQNGRLPNGNIDNENNNSTPDP. Positions 157 to 168 are enriched in polar residues; it reads NIDNENNNSTPD. Residues Cys186, Cys189, Cys233, and Cys236 each coordinate Zn(2+). Residue His317 is the Proton acceptor of the active site.

Belongs to the peptidase C19 family. USP12/USP46 subfamily. As to quaternary structure, interacts with WDR48. Interacts with WDR20; this interaction promotes translocation of the USP12 complex to the plasma membrane. Component of the USP12-WDR20-WDR48 deubiquitinating complex. Component of the USP12-DMWD-WDR48 deubiquitinating complex. Interacts with PHLPP1. Interacts with RBPJ. Interacts with CBP; this interaction blocks the acetyltransferase activity of CREBBP. Interacts with ITCH; the interaction is more efficient when both USP12 and WDR48/UAF1 are involved and may mediate recruitment of the USP12 deubiquitinating complex to Notch. Interacts with OPTN and SQSTM1/p62; the interaction is independent of deubiquitinase activity and may be involved in regulation of autophagic flux. In terms of assembly, (Microbial infection) Interacts with Epstein-Barr virus protein EBNA3.

The protein localises to the nucleus. The protein resides in the cytoplasm. Its subcellular location is the cell membrane. The catalysed reaction is Thiol-dependent hydrolysis of ester, thioester, amide, peptide and isopeptide bonds formed by the C-terminal Gly of ubiquitin (a 76-residue protein attached to proteins as an intracellular targeting signal).. Its activity is regulated as follows. Activated by interaction with WDR20, WDR48 and DMWD through different allosteric mechanisms. Its function is as follows. Deubiquitinating enzyme that plays various roles in the regulation of the immune response and inflammation. During TCR engagement and activation, translocates into the cytoplasm and deubiquitinates its substrates LAT and TRAT1 and prevents their lysosome-dependent degradation to stabilize the TCR signaling complex at the plasma membrane. Plays an essential role in the selective LPS-induced macrophage response through the activation of NF-kappa-B pathway. In addition, promotes that antiviral immune response through targeting DNA sensor IFI16 to inhibit its proteasome-dependent degradation. Participates in the interferon signaling pathway and antiviral response independently of its deubiquitinase activity by maintaining nuclear phosphorylated STAT1 levels via inhibition of its CREBBP-mediated acetylation and subsequent dephosphorylation. Plays an intrinsic role in promoting the differentiation, activation and proliferation of CD4(+) T-cell by activating the NF-kappa-B signaling pathway through deubiquitinating and stabilizing B-cell lymphoma/leukemia 10/BCL10. In myeloid-derived suppressor cells promotes the activation of the NF-kappa-B via deubiquitination and stabilization of RELA. Regulates the 'Lys-63'-linked polyubiquitin chains of BAX and thereby modulates the mitochondrial apoptotic process. Negative regulator of NOTCH signaling that specifically deubiquitinates non-activated NOTCH receptors to target them for lysosomal degradation; deubiquitination of NOTCH stimulates its transport form late endosomes to lysosomes. Protects neurons against HTT/huntingtin-induced polyglutamine expansion-dependent neurodegeneration through regulation of autophagic flux. This function is independent of deubiquitinase activity or of other components of the USP12-WDR20-WDR48 deubiquitinating complex. In complex with WDR48, acts as a potential tumor suppressor by positively regulating PHLPP1 stability. In terms of biological role, (Microbial infection) Forms a complex with Epstein-Barr virus protein EBNA3 which is an active deubiquitinase activity that may select specific substrates to promote B-lymphocyte transformation. This chain is Ubiquitin carboxyl-terminal hydrolase 12 (USP12), found in Homo sapiens (Human).